The chain runs to 514 residues: MDEFHRYGKEDSSWQQCFLYPLFFQEDLYAISHDHYLDVSSSSEPMEHLSSNDKLSFLIVKRLIGQIRKQNNSIFLFVNCDPNPLVNHNKSSYSESVLEGLTLVLEVPFSIRSKYSVEGINEWKSFRSIHSIFPFLEDKFPHSNYILDTRIPYSIHPEILVRTFRRWIRDAPSLHPLRSVLYKYRNSPENLKRSIIVVPRVNTRFLLFLWNNYVYECESILVPLLKRSFHPRSSSYGSFPERTHFHRKVKHIIRNFRRNSLKSIWSLKDPKIHYVRYGERPIIAIRGTHLLVKKCRYHLPIFRQCYFHLWSEPYRVCSHQLSKNCSSSLGYSLRVRMKPLLVRTKMLDKLFITDLITDEFDPIVPIVPIIGLLAKEKFCDISGRPISKLSWTSLTDDDILDRFDRIWRNIFHYYSGSFGRDGLYRIKYILSLSCAKTLACKHKSTIRVVRKELGPELFKKYFSKEREFDYPAFSSKAAAHSQRERIWHSDIPQINPLANSWQKIQDLRIERKLI.

This sequence belongs to the intron maturase 2 family. MatK subfamily.

It localises to the plastid. Its subcellular location is the chloroplast. Usually encoded in the trnK tRNA gene intron. Probably assists in splicing its own and other chloroplast group II introns. The polypeptide is Maturase K (Tsuga canadensis (Eastern hemlock)).